Consider the following 212-residue polypeptide: ATP-dependent dethiobiotin synthetase BioD (212 aa).

13 to 18 (GIGKTV) is an ATP binding site. A Mg(2+)-binding site is contributed by Thr17. Lys33 is an active-site residue. A substrate-binding site is contributed by Ser37. Glu100 lines the Mg(2+) pocket. ATP is bound by residues 100 to 103 (EGAG), 160 to 161 (IS), and 184 to 186 (PLL).

This sequence belongs to the dethiobiotin synthetase family. Homodimer. Mg(2+) serves as cofactor.

Its subcellular location is the cytoplasm. It carries out the reaction (7R,8S)-7,8-diammoniononanoate + CO2 + ATP = (4R,5S)-dethiobiotin + ADP + phosphate + 3 H(+). Its pathway is cofactor biosynthesis; biotin biosynthesis; biotin from 7,8-diaminononanoate: step 1/2. Catalyzes a mechanistically unusual reaction, the ATP-dependent insertion of CO2 between the N7 and N8 nitrogen atoms of 7,8-diaminopelargonic acid (DAPA, also called 7,8-diammoniononanoate) to form a ureido ring. This Brucella abortus (strain S19) protein is ATP-dependent dethiobiotin synthetase BioD.